The sequence spans 610 residues: UvrABC system protein C (610 aa).

The 79-residue stretch at 16–94 (SQPGVYSMYD…IKLYQPRYNV (79 aa)) folds into the GIY-YIG domain. The UVR domain maps to 204-239 (QQVLNQLVERMELASRALNFEDAAHARDQIQAVRRV).

Belongs to the UvrC family. In terms of assembly, interacts with UvrB in an incision complex.

It localises to the cytoplasm. In terms of biological role, the UvrABC repair system catalyzes the recognition and processing of DNA lesions. UvrC both incises the 5' and 3' sides of the lesion. The N-terminal half is responsible for the 3' incision and the C-terminal half is responsible for the 5' incision. This chain is UvrABC system protein C, found in Sodalis glossinidius (strain morsitans).